Reading from the N-terminus, the 616-residue chain is Chaperone protein DnaK (616 aa).

Thr-174 bears the Phosphothreonine; by autocatalysis mark. Residues 575-616 (QQTQGAQSDPGAAGFGGQQEAPGAGQDENVVDADYKVVDDDK) form a disordered region. A compositionally biased stretch (basic and acidic residues) spans 607–616 (ADYKVVDDDK).

This sequence belongs to the heat shock protein 70 family.

In terms of biological role, acts as a chaperone. This Ruminiclostridium cellulolyticum (strain ATCC 35319 / DSM 5812 / JCM 6584 / H10) (Clostridium cellulolyticum) protein is Chaperone protein DnaK.